We begin with the raw amino-acid sequence, 298 residues long: Protease HtpX homolog (298 aa).

Transmembrane regions (helical) follow at residues 14–34 (VVLLVVFFALLALIGASAGYL) and 39–59 (YAMGLVLALVIGVIYATSMIF). Histidine 143 serves as a coordination point for Zn(2+). Glutamate 144 is a catalytic residue. Histidine 147 provides a ligand contact to Zn(2+). The next 2 helical transmembrane spans lie at 158 to 178 (IAVALASAVTVISSIGGRMLW) and 197 to 217 (IITLLLSLLSLLLAPLVASLI). Zn(2+) is bound at residue glutamate 226.

It belongs to the peptidase M48B family. Requires Zn(2+) as cofactor.

The protein localises to the cell membrane. The protein is Protease HtpX homolog of Streptococcus pyogenes serotype M28 (strain MGAS6180).